Reading from the N-terminus, the 848-residue chain is Adenylate cyclase (848 aa).

A catalytic region spans residues 1-535 (MYLYIETLKQ…DVSHHFPLRL (535 aa)). The regulatory stretch occupies residues 541–848 (KALYSPCEIR…DTPLLQQYFS (308 aa)). Position 609 is a phosphohistidine; by CRR (His-609).

Belongs to the adenylyl cyclase class-1 family.

Its subcellular location is the cytoplasm. It catalyses the reaction ATP = 3',5'-cyclic AMP + diphosphate. The protein is Adenylate cyclase (cyaA) of Shigella flexneri.